Reading from the N-terminus, the 343-residue chain is Glycerol-3-phosphate dehydrogenase [NAD(P)+] (343 aa).

NADPH is bound by residues S11, W12, H32, R33, and K106. Sn-glycerol 3-phosphate is bound by residues K106, G136, and S138. A140 is a binding site for NADPH. Sn-glycerol 3-phosphate is bound by residues K192, D245, S255, R256, and N257. Catalysis depends on K192, which acts as the Proton acceptor. R256 provides a ligand contact to NADPH. Positions 280 and 282 each coordinate NADPH.

Belongs to the NAD-dependent glycerol-3-phosphate dehydrogenase family.

It localises to the cytoplasm. The catalysed reaction is sn-glycerol 3-phosphate + NAD(+) = dihydroxyacetone phosphate + NADH + H(+). It catalyses the reaction sn-glycerol 3-phosphate + NADP(+) = dihydroxyacetone phosphate + NADPH + H(+). Its pathway is membrane lipid metabolism; glycerophospholipid metabolism. Catalyzes the reduction of the glycolytic intermediate dihydroxyacetone phosphate (DHAP) to sn-glycerol 3-phosphate (G3P), the key precursor for phospholipid synthesis. This is Glycerol-3-phosphate dehydrogenase [NAD(P)+] from Geobacillus thermodenitrificans (strain NG80-2).